The following is a 36-amino-acid chain: Putative DNA-binding protein inhibitor ID-2B (36 aa).

The polypeptide is Putative DNA-binding protein inhibitor ID-2B (ID2B) (Homo sapiens (Human)).